An 865-amino-acid chain; its full sequence is Probable alpha/beta-glucosidase ARB_02101 (865 aa).

The signal sequence occupies residues 1 to 21; that stretch reads MFGRTLALAAVFATTVLSAAA. 2 N-linked (GlcNAc...) asparagine glycosylation sites follow: asparagine 101 and asparagine 299. Aspartate 428 functions as the Nucleophile in the catalytic mechanism. The active site involves glutamate 431. N-linked (GlcNAc...) asparagine glycosylation occurs at asparagine 515. Catalysis depends on aspartate 548, which acts as the Proton donor. N-linked (GlcNAc...) asparagine glycans are attached at residues asparagine 549, asparagine 585, and asparagine 748.

Belongs to the glycosyl hydrolase 31 family.

The protein localises to the secreted. It catalyses the reaction Hydrolysis of terminal, non-reducing (1-&gt;4)-linked alpha-D-glucose residues with release of alpha-D-glucose.. It carries out the reaction Hydrolysis of terminal, non-reducing beta-D-glucosyl residues with release of beta-D-glucose.. In terms of biological role, glucosidase involved in the degradation of cellulosic biomass. Has both alpha- and beta-glucosidase activity. In Arthroderma benhamiae (strain ATCC MYA-4681 / CBS 112371) (Trichophyton mentagrophytes), this protein is Probable alpha/beta-glucosidase ARB_02101.